The following is a 441-amino-acid chain: Methylenetetrahydrofolate--tRNA-(uracil-5-)-methyltransferase TrmFO (441 aa).

11 to 16 (GGGLAG) contacts FAD.

Belongs to the MnmG family. TrmFO subfamily. Requires FAD as cofactor.

It is found in the cytoplasm. The catalysed reaction is uridine(54) in tRNA + (6R)-5,10-methylene-5,6,7,8-tetrahydrofolate + NADH + H(+) = 5-methyluridine(54) in tRNA + (6S)-5,6,7,8-tetrahydrofolate + NAD(+). The enzyme catalyses uridine(54) in tRNA + (6R)-5,10-methylene-5,6,7,8-tetrahydrofolate + NADPH + H(+) = 5-methyluridine(54) in tRNA + (6S)-5,6,7,8-tetrahydrofolate + NADP(+). Its function is as follows. Catalyzes the folate-dependent formation of 5-methyl-uridine at position 54 (M-5-U54) in all tRNAs. The chain is Methylenetetrahydrofolate--tRNA-(uracil-5-)-methyltransferase TrmFO from Syntrophus aciditrophicus (strain SB).